The sequence spans 184 residues: MGARLKEVYSTEIAPALVKRLQLKNVMEVPRVEKVVLNMGLGEAIQNIKVLESAVEELTRICGQKPVVTKAKKSIAQFKLREGMPIGCMVTLRRDKAYEFLDRLINVALPRVRDFKGVSKKGFDGRGNYTLGIREQLIFPEIDLEKVDKVKGLNVTIVTTAKNDEEGYALMEAIGMPFPKKAQD.

It belongs to the universal ribosomal protein uL5 family. As to quaternary structure, part of the 50S ribosomal subunit; part of the 5S rRNA/L5/L18/L25 subcomplex. Contacts the 5S rRNA and the P site tRNA. Forms a bridge to the 30S subunit in the 70S ribosome.

Its function is as follows. This is one of the proteins that bind and probably mediate the attachment of the 5S RNA into the large ribosomal subunit, where it forms part of the central protuberance. In the 70S ribosome it contacts protein S13 of the 30S subunit (bridge B1b), connecting the 2 subunits; this bridge is implicated in subunit movement. Contacts the P site tRNA; the 5S rRNA and some of its associated proteins might help stabilize positioning of ribosome-bound tRNAs. This is Large ribosomal subunit protein uL5 from Syntrophotalea carbinolica (strain DSM 2380 / NBRC 103641 / GraBd1) (Pelobacter carbinolicus).